A 643-amino-acid polypeptide reads, in one-letter code: Threonine--tRNA ligase (643 aa).

One can recognise a TGS domain in the interval 1 to 61 (MPIITLPDGS…SEDSSLEIIT (61 aa)). Positions 243-534 (DHRRIGKALD…ITEEYAGFFP (292 aa)) are catalytic. Zn(2+) is bound by residues cysteine 334, histidine 385, and histidine 511.

It belongs to the class-II aminoacyl-tRNA synthetase family. In terms of assembly, homodimer. Zn(2+) serves as cofactor.

It is found in the cytoplasm. It catalyses the reaction tRNA(Thr) + L-threonine + ATP = L-threonyl-tRNA(Thr) + AMP + diphosphate + H(+). Catalyzes the attachment of threonine to tRNA(Thr) in a two-step reaction: L-threonine is first activated by ATP to form Thr-AMP and then transferred to the acceptor end of tRNA(Thr). Also edits incorrectly charged L-seryl-tRNA(Thr). The protein is Threonine--tRNA ligase of Actinobacillus pleuropneumoniae serotype 5b (strain L20).